Consider the following 292-residue polypeptide: Protoheme IX farnesyltransferase (292 aa).

The next 9 membrane-spanning stretches (helical) occupy residues 13–33 (ILFG…QGHV), 35–55 (FLLL…GCVV), 84–104 (TALI…WFWV), 106–126 (PYSF…YSLW), 135–155 (TIIG…AVTH), 161–181 (ALLI…AIAI), 206–226 (VECL…YCFG), 231–251 (FFLL…IIGF), and 263–283 (LFLF…FTYQ).

It belongs to the UbiA prenyltransferase family. Protoheme IX farnesyltransferase subfamily.

It is found in the cell inner membrane. It catalyses the reaction heme b + (2E,6E)-farnesyl diphosphate + H2O = Fe(II)-heme o + diphosphate. The protein operates within porphyrin-containing compound metabolism; heme O biosynthesis; heme O from protoheme: step 1/1. Functionally, converts heme B (protoheme IX) to heme O by substitution of the vinyl group on carbon 2 of heme B porphyrin ring with a hydroxyethyl farnesyl side group. This chain is Protoheme IX farnesyltransferase, found in Acinetobacter baylyi (strain ATCC 33305 / BD413 / ADP1).